A 533-amino-acid polypeptide reads, in one-letter code: Putative phosphate permease jhp_1384 (533 aa).

Helical transmembrane passes span 23 to 43 (IALALLFLIGAALLALIFGQA), 47 to 67 (GLLLIFAAVIGGYMAMNIGAN), 81 to 101 (AISMGGAILIAAVCEMLGAII), 129 to 149 (VMLASLLSGALWLHVATLIGA), 156 to 176 (SVVGGIMGAGMAAAGMSAINW), 182 to 202 (IVASWVISPLMGALIAMFFLM), 221 to 241 (VVPYLVALMSLAFSWYLIVKV), 248 to 268 (VGFEIQLACGCVLALLIFILF), 286 to 306 (VNELFNVPLIFAAALLSFAHG), 338 to 358 (VPLWIMVVGAAGIALGLSLYG), 372 to 392 (LDKMQAFCIALSAVITVLLAS), and 509 to 529 (LVTVPVSALLGALLFVALGFI).

This sequence belongs to the inorganic phosphate transporter (PiT) (TC 2.A.20) family.

It is found in the cell membrane. Potential transporter for phosphate. The polypeptide is Putative phosphate permease jhp_1384 (Helicobacter pylori (strain J99 / ATCC 700824) (Campylobacter pylori J99)).